The chain runs to 209 residues: Uridine kinase (209 aa).

12-19 is an ATP binding site; it reads GGTGSGKS.

It belongs to the uridine kinase family.

The protein localises to the cytoplasm. It catalyses the reaction uridine + ATP = UMP + ADP + H(+). The catalysed reaction is cytidine + ATP = CMP + ADP + H(+). The protein operates within pyrimidine metabolism; CTP biosynthesis via salvage pathway; CTP from cytidine: step 1/3. Its pathway is pyrimidine metabolism; UMP biosynthesis via salvage pathway; UMP from uridine: step 1/1. This is Uridine kinase from Clostridium tetani (strain Massachusetts / E88).